Here is a 236-residue protein sequence, read N- to C-terminus: Phosphoribosylaminoimidazole-succinocarboxamide synthase (236 aa).

This sequence belongs to the SAICAR synthetase family.

It catalyses the reaction 5-amino-1-(5-phospho-D-ribosyl)imidazole-4-carboxylate + L-aspartate + ATP = (2S)-2-[5-amino-1-(5-phospho-beta-D-ribosyl)imidazole-4-carboxamido]succinate + ADP + phosphate + 2 H(+). It functions in the pathway purine metabolism; IMP biosynthesis via de novo pathway; 5-amino-1-(5-phospho-D-ribosyl)imidazole-4-carboxamide from 5-amino-1-(5-phospho-D-ribosyl)imidazole-4-carboxylate: step 1/2. The polypeptide is Phosphoribosylaminoimidazole-succinocarboxamide synthase (Campylobacter jejuni (strain RM1221)).